Consider the following 1101-residue polypeptide: MEPPAAKRSRGCPAGDEPGTGARRSRPEPLLDLSAKRVAESWAFEQVEERFSRVPEPVQKRIVFWSFPRSEREICMYSSLGYQPPEGEQDTRVPFTRGLHLLQSGAVDRVLQVGFHLSGNIREVGGPGEPEHLYHVSISFDRCKITSVSCGCDNRDLFYCAHVVALSLYRIRHARQVELRLPISETLSQMNRDQLQKFVQYLISAHHTEVLPTAQRLADEILLLGSEINLVHGAPDPTAGAGTEDANCWHLDEEQIQEQVKQLLSNGGHYGASQQLRSMFSKVREMLRARDSNGARMLILMTEQFLQDPRLALWRQQGAGMTDKCRQLWDELGALWVCVILSPHCKPDERSGWLQLLGTWDKLDVCPLEEGNYSLDIPSLQPALTSRTGSEDEEEVTAASPRRTVFSRALQAGELHWNDSHLQRILASDSCGPTLTGSMGSDKPTFDPQGHPIWLGEPFPTACARVDTLRAHGYPHKALRLACAIINTLRLQRRHQLESYKQQKKELLQKGATGVTSTEGWVGHPLDPIGCLCRALLEACRLEEEPHSLFPDSAPEKRKLAYQHVLVPGSPGESYLALALEVALLGLGQQRALPEGLYAQDKVVRNEEQLLALLEEVELDERLVQVLRKQAGLLLEGGPFSGFGEVIFRESVPMHTCARYLFTALLPHDPDLAFRLALRAMRLPVLETTFPAGESHPNPLDSIMSNRFPRWFILGHLETRQCELASTMLTAAKGDTKWLHAVLGSVQQNIHSPALLFKLAQDACKTATPASAPPDTVLLGIALELGLQVMRMTLNTMTWRRREMVRWLVSCATEIGPPALMSIMKNWYSLFTPVEAVTIVAVTGTTHATLLRLQLDTAGREELWACARTLALQCAMKDPQNCALPALTLCEKNHAAFEAAYQIVLDAAAGGLGHAHLFTVARYMEHRGLPLRAYKLATLALAQLSIAFNQDSHPAVNDVLWACSLSHSLGRHELSAIVPLIIRSIHCAPMLSDILRRWTLSAPGLGPLGARRATKPLGTDRAPLCQLLDAAVAAYITTSHSRLTHISPRHYGDFIEFLGKARETFLLAPDGHLQFAQFLENLKQTYKGKKKLMLLVRERFG.

Positions 1-29 are disordered; it reads MEPPAAKRSRGCPAGDEPGTGARRSRPEP. Residues 134–171 form an SWIM-type zinc finger; the sequence is YHVSISFDRCKITSVSCGCDNRDLFYCAHVVALSLYRI.

The sequence is that of Zinc finger SWIM domain-containing protein 4 (Zswim4) from Mus musculus (Mouse).